The sequence spans 324 residues: Glutathione synthetase (324 aa).

One can recognise an ATP-grasp domain in the interval 129–313 (KLYALHFPDL…LEDEIVDWLV (185 aa)). 155-211 (VDIHGRAVIKPLDGKGGEGIFLLARADRNLNAIIEASTAYGTRHVMVQRYLEESRQG) contacts ATP. Positions 284 and 286 each coordinate Mg(2+).

The protein belongs to the prokaryotic GSH synthase family. It depends on Mg(2+) as a cofactor. Requires Mn(2+) as cofactor.

It carries out the reaction gamma-L-glutamyl-L-cysteine + glycine + ATP = glutathione + ADP + phosphate + H(+). It participates in sulfur metabolism; glutathione biosynthesis; glutathione from L-cysteine and L-glutamate: step 2/2. The chain is Glutathione synthetase from Gloeobacter violaceus (strain ATCC 29082 / PCC 7421).